We begin with the raw amino-acid sequence, 299 residues long: Putative pyrroline-5-carboxylate reductase 4 (299 aa).

The protein belongs to the pyrroline-5-carboxylate reductase family.

It carries out the reaction L-proline + NADP(+) = (S)-1-pyrroline-5-carboxylate + NADPH + 2 H(+). The catalysed reaction is L-proline + NAD(+) = (S)-1-pyrroline-5-carboxylate + NADH + 2 H(+). The protein operates within amino-acid biosynthesis; L-proline biosynthesis; L-proline from L-glutamate 5-semialdehyde: step 1/1. This is Putative pyrroline-5-carboxylate reductase 4 from Caenorhabditis elegans.